We begin with the raw amino-acid sequence, 138 residues long: Small ribosomal subunit protein uS11c (138 aa).

The interval 1–21 is disordered; the sequence is MTKSIPRIGSRRGGRIASRKN. Basic residues predominate over residues 9–21; that stretch reads GSRRGGRIASRKN.

This sequence belongs to the universal ribosomal protein uS11 family. In terms of assembly, part of the 30S ribosomal subunit.

The protein localises to the plastid. Its subcellular location is the chloroplast. The sequence is that of Small ribosomal subunit protein uS11c from Calycanthus floridus var. glaucus (Eastern sweetshrub).